The primary structure comprises 390 residues: Acid protease (390 aa).

An N-terminal signal peptide occupies residues 1-18; that stretch reads MLFSKSLLLSVLASLSFA. The region spanning 75–386 is the Peptidase A1 domain; sequence YLTTIEIGTP…DIDNSQVGIA (312 aa). Active-site residues include Asp-93 and Asp-282.

Belongs to the peptidase A1 family.

The sequence is that of Acid protease (PEP1) from Saccharomycopsis fibuligera (Yeast).